The primary structure comprises 647 residues: 1-deoxy-D-xylulose-5-phosphate synthase (647 aa).

Residues histidine 72 and 113–115 (GHA) contribute to the thiamine diphosphate site. Aspartate 144 contributes to the Mg(2+) binding site. Residues 145-146 (GA), asparagine 174, tyrosine 287, and glutamate 370 contribute to the thiamine diphosphate site. Residue asparagine 174 coordinates Mg(2+).

It belongs to the transketolase family. DXPS subfamily. In terms of assembly, homodimer. Mg(2+) is required as a cofactor. It depends on thiamine diphosphate as a cofactor.

The catalysed reaction is D-glyceraldehyde 3-phosphate + pyruvate + H(+) = 1-deoxy-D-xylulose 5-phosphate + CO2. Its pathway is metabolic intermediate biosynthesis; 1-deoxy-D-xylulose 5-phosphate biosynthesis; 1-deoxy-D-xylulose 5-phosphate from D-glyceraldehyde 3-phosphate and pyruvate: step 1/1. Functionally, catalyzes the acyloin condensation reaction between C atoms 2 and 3 of pyruvate and glyceraldehyde 3-phosphate to yield 1-deoxy-D-xylulose-5-phosphate (DXP). The protein is 1-deoxy-D-xylulose-5-phosphate synthase of Synechococcus sp. (strain WH7803).